A 61-amino-acid chain; its full sequence is Large ribosomal subunit protein uL29 (61 aa).

It belongs to the universal ribosomal protein uL29 family.

The sequence is that of Large ribosomal subunit protein uL29 from Nitratidesulfovibrio vulgaris (strain DSM 19637 / Miyazaki F) (Desulfovibrio vulgaris).